Consider the following 727-residue polypeptide: Pentatricopeptide repeat-containing protein At4g20740 (727 aa).

The segment at Met-1–Ile-84 is disordered. Positions Ser-38–Ala-56 are enriched in polar residues. A compositionally biased stretch (basic and acidic residues) spans Thr-59–Thr-70. 14 PPR repeats span residues Asp-157–Pro-191, Ser-192–Pro-226, Arg-227–Glu-261, Glu-262–Pro-296, Asp-297–Pro-331, Asp-332–Ile-366, Asp-367–Ala-401, Asp-402–Pro-436, Asp-437–Val-471, Ser-506–Pro-540, Asp-541–Pro-575, Ser-576–Asn-606, Met-612–Ile-646, and Asn-647–Thr-681.

It belongs to the PPR family. P subfamily.

This is Pentatricopeptide repeat-containing protein At4g20740 from Arabidopsis thaliana (Mouse-ear cress).